We begin with the raw amino-acid sequence, 84 residues long: Exodeoxyribonuclease 7 small subunit (84 aa).

It belongs to the XseB family. Heterooligomer composed of large and small subunits.

The protein localises to the cytoplasm. It carries out the reaction Exonucleolytic cleavage in either 5'- to 3'- or 3'- to 5'-direction to yield nucleoside 5'-phosphates.. Functionally, bidirectionally degrades single-stranded DNA into large acid-insoluble oligonucleotides, which are then degraded further into small acid-soluble oligonucleotides. The chain is Exodeoxyribonuclease 7 small subunit from Caulobacter vibrioides (strain ATCC 19089 / CIP 103742 / CB 15) (Caulobacter crescentus).